The primary structure comprises 493 residues: Aspartate-semialdehyde dehydrogenase (Non-phosphorylating) (493 aa).

Residues 160–161, 184–187, and 237–238 contribute to the NADP(+) site; these read WN, KPAH, and GS. Glu259 serves as the catalytic Proton acceptor. Leu260 provides a ligand contact to NADP(+). Cys293 serves as the catalytic Nucleophile. Residue Glu390 coordinates NADP(+).

This sequence belongs to the aldehyde dehydrogenase family.

It is found in the cytoplasm. The catalysed reaction is L-aspartate 4-semialdehyde + NAD(+) + H2O = L-aspartate + NADH + 2 H(+). Functionally, involved in the degradation of ectoine, which allows H.elongata to utilize ectoine as both a carbon and a nitrogen source for growth. Probably catalyzes the NAD(+)-dependent oxidation of L-aspartate-semialdehyde to L-aspartate. The sequence is that of Aspartate-semialdehyde dehydrogenase (Non-phosphorylating) from Halomonas elongata (strain ATCC 33173 / DSM 2581 / NBRC 15536 / NCIMB 2198 / 1H9).